We begin with the raw amino-acid sequence, 188 residues long: Ion-translocating oxidoreductase complex subunit B (188 aa).

Positions methionine 1–alanine 26 are hydrophobic. A 4Fe-4S domain is found at glutamine 32–leucine 90. 12 residues coordinate [4Fe-4S] cluster: cysteine 49, cysteine 52, cysteine 57, cysteine 73, cysteine 113, cysteine 116, cysteine 119, cysteine 123, cysteine 143, cysteine 146, cysteine 149, and cysteine 153. 4Fe-4S ferredoxin-type domains follow at residues arginine 104–arginine 133 and leucine 134–isoleucine 163.

Belongs to the 4Fe4S bacterial-type ferredoxin family. RnfB subfamily. As to quaternary structure, the complex is composed of six subunits: RnfA, RnfB, RnfC, RnfD, RnfE and RnfG. It depends on [4Fe-4S] cluster as a cofactor.

The protein localises to the cell inner membrane. Functionally, part of a membrane-bound complex that couples electron transfer with translocation of ions across the membrane. This chain is Ion-translocating oxidoreductase complex subunit B, found in Pseudomonas paraeruginosa (strain DSM 24068 / PA7) (Pseudomonas aeruginosa (strain PA7)).